The primary structure comprises 503 residues: Activin receptor type-1-like (503 aa).

A signal peptide spans 1–21; that stretch reads MTLGSPRRGLLMLLMALVTQG. Topologically, residues 22 to 118 are extracellular; the sequence is DPVKPSRGPL…PSEQPGTDGQ (97 aa). Disulfide bonds link Cys34–Cys51, Cys36–Cys41, and Cys46–Cys69. The tract at residues 73-76 is mediates specificity for BMP ligand; that stretch reads HREL. 2 disulfide bridges follow: Cys77-Cys89 and Cys90-Cys95. Residue Asn98 is glycosylated (N-linked (GlcNAc...) asparagine). A helical membrane pass occupies residues 119–141; the sequence is LALILGPVLALLALVALGVLGLW. Residues 142–503 lie on the Cytoplasmic side of the membrane; that stretch reads HVRRRQEKQR…NSPEKPKVIQ (362 aa). Phosphoserine occurs at positions 155, 160, and 161. The region spanning 172–201 is the GS domain; it reads SMLGDLLDSDCTTGSGSGLPFLVQRTVARQ. The Protein kinase domain occupies 202 to 492; that stretch reads VALVECVGKG…LRIKKTLQKI (291 aa). Residues 208 to 216 and Lys229 each bind ATP; that span reads VGKGRYGEV. Catalysis depends on Asp330, which acts as the Proton acceptor.

This sequence belongs to the protein kinase superfamily. TKL Ser/Thr protein kinase family. TGFB receptor subfamily. Interacts with TSC22D1/TSC-22. Requires Mg(2+) as cofactor. It depends on Mn(2+) as a cofactor.

The protein localises to the cell membrane. It catalyses the reaction L-threonyl-[receptor-protein] + ATP = O-phospho-L-threonyl-[receptor-protein] + ADP + H(+). The catalysed reaction is L-seryl-[receptor-protein] + ATP = O-phospho-L-seryl-[receptor-protein] + ADP + H(+). Type I receptor for TGF-beta family ligands BMP9/GDF2 and BMP10 and important regulator of normal blood vessel development. On ligand binding, forms a receptor complex consisting of two type II and two type I transmembrane serine/threonine kinases. Type II receptors phosphorylate and activate type I receptors which autophosphorylate, then bind and activate SMAD transcriptional regulators. May bind activin as well. The sequence is that of Activin receptor type-1-like (ACVRL1) from Pongo abelii (Sumatran orangutan).